The following is a 200-amino-acid chain: Recombination protein RecR (200 aa).

A C4-type zinc finger spans residues 59–74 (CSVCFHLSADPVCDIC). One can recognise a Toprim domain in the interval 82 to 176 (TVICVVADSR…RVTRIAFGLP (95 aa)).

This sequence belongs to the RecR family.

Its function is as follows. May play a role in DNA repair. It seems to be involved in an RecBC-independent recombinational process of DNA repair. It may act with RecF and RecO. In Acaryochloris marina (strain MBIC 11017), this protein is Recombination protein RecR.